We begin with the raw amino-acid sequence, 215 residues long: Probable nicotinate-nucleotide adenylyltransferase (215 aa).

This sequence belongs to the NadD family.

It carries out the reaction nicotinate beta-D-ribonucleotide + ATP + H(+) = deamido-NAD(+) + diphosphate. It participates in cofactor biosynthesis; NAD(+) biosynthesis; deamido-NAD(+) from nicotinate D-ribonucleotide: step 1/1. Catalyzes the reversible adenylation of nicotinate mononucleotide (NaMN) to nicotinic acid adenine dinucleotide (NaAD). The sequence is that of Probable nicotinate-nucleotide adenylyltransferase from Coxiella burnetii (strain Dugway 5J108-111).